Reading from the N-terminus, the 449-residue chain is 3-phosphoshikimate 1-carboxyvinyltransferase (449 aa).

The interval 1 to 30 (MSHDSSPQPLTAAPGAPLRGRLRPPGDKSI) is disordered. Positions 28, 29, and 33 each coordinate 3-phosphoshikimate. K28 contributes to the phosphoenolpyruvate binding site. Positions 101 and 129 each coordinate phosphoenolpyruvate. Positions 175, 177, 330, and 357 each coordinate 3-phosphoshikimate. Q177 contacts phosphoenolpyruvate. Residue D330 is the Proton acceptor of the active site. Residues R361 and R405 each coordinate phosphoenolpyruvate.

The protein belongs to the EPSP synthase family. In terms of assembly, monomer.

The protein resides in the cytoplasm. The catalysed reaction is 3-phosphoshikimate + phosphoenolpyruvate = 5-O-(1-carboxyvinyl)-3-phosphoshikimate + phosphate. It participates in metabolic intermediate biosynthesis; chorismate biosynthesis; chorismate from D-erythrose 4-phosphate and phosphoenolpyruvate: step 6/7. In terms of biological role, catalyzes the transfer of the enolpyruvyl moiety of phosphoenolpyruvate (PEP) to the 5-hydroxyl of shikimate-3-phosphate (S3P) to produce enolpyruvyl shikimate-3-phosphate and inorganic phosphate. This chain is 3-phosphoshikimate 1-carboxyvinyltransferase, found in Methylobacterium radiotolerans (strain ATCC 27329 / DSM 1819 / JCM 2831 / NBRC 15690 / NCIMB 10815 / 0-1).